We begin with the raw amino-acid sequence, 326 residues long: Toluene-4-monooxygenase system, ferredoxin--NAD(+) reductase component (326 aa).

In terms of domain architecture, 2Fe-2S ferredoxin-type spans 1–92 (MFNIQSDDLL…DLKIKVINRA (92 aa)). [2Fe-2S] cluster is bound by residues Cys36, Cys41, Cys44, and Cys76. The segment at 95-326 (RASHPPKRFS…FEAIHFDRFF (232 aa)) is ferredoxin-reductase. The FAD-binding FR-type domain occupies 100–195 (PKRFSTRVVS…DGPYGLSVLK (96 aa)). Residues 146–149 (RAYS), 162–164 (IVK), and 170–172 (KVS) contribute to the FAD site.

It belongs to the bacterial ring-hydroxylating dioxygenase ferredoxin reductase family. As to quaternary structure, monomer. The alkene monooxygenase multicomponent enzyme system is composed of an electron transfer component and a monooxygenase component interacting with the effector protein TmoD. The electron transfer component is composed of a ferredoxin reductase (TmoF) and a ferredoxin (TmoC), and the monooxygenase component is formed by a heterohexamer (dimer of heterotrimers) of two alpha subunits (TmoA), two beta subunits (TmoE) and two gamma subunits (TmoB). FAD serves as cofactor. The cofactor is [2Fe-2S] cluster.

The enzyme catalyses 2 reduced [2Fe-2S]-[ferredoxin] + NAD(+) + H(+) = 2 oxidized [2Fe-2S]-[ferredoxin] + NADH. The protein operates within xenobiotic degradation; toluene degradation. Its function is as follows. Reductase component of the toluene-4-monooxygenase multicomponent enzyme system which catalyzes the O2- and NADH-dependent hydroxylation of toluene to form p-cresol. Ferredoxin reductase catalyzes the transfer of electrons from NADH to ferredoxin (TmoC). This chain is Toluene-4-monooxygenase system, ferredoxin--NAD(+) reductase component, found in Ectopseudomonas mendocina (Pseudomonas mendocina).